Reading from the N-terminus, the 248-residue chain is Tyrosine recombinase XerD-like (248 aa).

Positions 1–72 constitute a Core-binding (CB) domain; the sequence is MKSYIEPFIA…TANQFLYYLY (72 aa). Residues 85-248 form the Tyr recombinase domain; the sequence is DTMKVMRTEK…PVTLEKYYKS (164 aa). Active-site residues include K149 and R213. The active-site O-(3'-phospho-DNA)-tyrosine intermediate is the Y245.

The protein belongs to the 'phage' integrase family. XerD-like subfamily.

The protein resides in the cytoplasm. Putative tyrosine recombinase. Not involved in the cutting and rejoining of the recombining DNA molecules on dif(SL) site. In Streptococcus pyogenes serotype M4 (strain MGAS10750), this protein is Tyrosine recombinase XerD-like.